Consider the following 342-residue polypeptide: P2Y purinoceptor 12 (342 aa).

The Extracellular segment spans residues 1–27; the sequence is MQAVDNLTSAPGNTSLCTRDYKITQVL. 2 N-linked (GlcNAc...) asparagine glycosylation sites follow: asparagine 6 and asparagine 13. 2 cysteine pairs are disulfide-bonded: cysteine 17-cysteine 270 and cysteine 97-cysteine 175. Residues 28-50 form a helical membrane-spanning segment; it reads FPLLYTVLFFVGLITNGLAMRIF. Residues 51–61 are Cytoplasmic-facing; it reads FQIRSKSNFII. A phosphoserine mark is found at serine 55 and serine 57. Residues 62–82 traverse the membrane as a helical segment; that stretch reads FLKNTVISDLLMILTFPFKIL. Over 83-97 the chain is Extracellular; that stretch reads SDAKLGTGPLRTFVC. Positions 93, 97, and 105 each coordinate ADP. The helical transmembrane segment at 98-118 threads the bilayer; sequence QVTSVIFYFTMYISISFLGLI. Residues 119-142 are Cytoplasmic-facing; sequence TIDRYQKTTRPFKTSNPKNLLGAK. The chain crosses the membrane as a helical span at residues 143–162; that stretch reads ILSVVIWAFMFLLSLPNMIL. ADP-binding positions include 156 to 159, 175 to 179, histidine 187, and asparagine 191; these read SLPN and CSFLK. The Extracellular portion of the chain corresponds to 163–185; the sequence is TNRQPRDKNVKKCSFLKSEFGLV. A helical transmembrane segment spans residues 186–207; the sequence is WHEIVNYICQVIFWINFLIVIV. At 208–233 the chain is on the cytoplasmic side; that stretch reads CYTLITKELYRSYVRTRGVGKVPRKK. The chain crosses the membrane as a helical span at residues 234–259; it reads VNVKVFIIIAVFFICFVPFHFARIPY. Residues 256–259, glutamine 263, and lysine 280 each bind ADP; that span reads RIPY. At 260 to 278 the chain is on the extracellular side; it reads TLSQTRDVFDCTAENTLFY. Residues 279 to 298 traverse the membrane as a helical segment; the sequence is VKESTLWLTSLNACLDPFIY. The Cytoplasmic segment spans residues 299–342; sequence FFLCKSFRNSLISMLKCPNSATSLSQDNRKKEQDGGDPNEETPM. The segment at 319 to 342 is disordered; it reads ATSLSQDNRKKEQDGGDPNEETPM. A compositionally biased stretch (acidic residues) spans 333–342; that stretch reads GGDPNEETPM.

The protein belongs to the G-protein coupled receptor 1 family. As to expression, highly expressed in the platelets, lower levels in the brain. Lowest levels in the lung, appendix, pituitary and adrenal gland. Expressed in the spinal cord and in the fetal brain.

It is found in the cell membrane. In terms of biological role, receptor for ADP and ATP coupled to G-proteins that inhibit the adenylyl cyclase second messenger system. Not activated by UDP and UTP. Required for normal platelet aggregation and blood coagulation. The chain is P2Y purinoceptor 12 (P2RY12) from Homo sapiens (Human).